Consider the following 252-residue polypeptide: Acetoacetate decarboxylase (252 aa).

Lys116 functions as the Schiff-base intermediate with acetoacetate in the catalytic mechanism.

This sequence belongs to the ADC family.

It catalyses the reaction acetoacetate + H(+) = acetone + CO2. Functionally, catalyzes the conversion of acetoacetate to acetone and carbon dioxide. In Paraburkholderia phytofirmans (strain DSM 17436 / LMG 22146 / PsJN) (Burkholderia phytofirmans), this protein is Acetoacetate decarboxylase.